A 199-amino-acid chain; its full sequence is Peptidyl-tRNA hydrolase (199 aa).

Residue Tyr18 coordinates tRNA. His23 serves as the catalytic Proton acceptor. The tRNA site is built by Tyr72, Asn74, and Asn120.

The protein belongs to the PTH family. As to quaternary structure, monomer.

The protein localises to the cytoplasm. It catalyses the reaction an N-acyl-L-alpha-aminoacyl-tRNA + H2O = an N-acyl-L-amino acid + a tRNA + H(+). Its function is as follows. Hydrolyzes ribosome-free peptidyl-tRNAs (with 1 or more amino acids incorporated), which drop off the ribosome during protein synthesis, or as a result of ribosome stalling. In terms of biological role, catalyzes the release of premature peptidyl moieties from peptidyl-tRNA molecules trapped in stalled 50S ribosomal subunits, and thus maintains levels of free tRNAs and 50S ribosomes. In Bifidobacterium longum (strain DJO10A), this protein is Peptidyl-tRNA hydrolase.